We begin with the raw amino-acid sequence, 442 residues long: F-box/kelch-repeat protein OR23 (442 aa).

Positions 37–84 constitute an F-box domain; it reads TLIPGLSNDVGRLILSFVPYPHISRIKSTCKSWYAFLSSKTLISLRHS. 6 Kelch repeats span residues 93–139, 145–200, 204–257, 269–328, 330–377, and 390–437; these read LSHL…NFVA, YVYV…AMPG, RIIV…LVEN, EFWV…KIVA, DCGK…ALNG, and LMDT…TTVM.

In Arabidopsis thaliana (Mouse-ear cress), this protein is F-box/kelch-repeat protein OR23 (OR23).